The sequence spans 699 residues: Kinesin-II 85 kDa subunit (699 aa).

The Kinesin motor domain maps to 10 to 342; it reads NVRVVVRCRP…LRYANRAKNI (333 aa). 97 to 104 is a binding site for ATP; that stretch reads GQTGTGKT. Residues 341–619 are a coiled coil; sequence NIKNKAKINE…EDIGEWQLKC (279 aa). Disordered regions lie at residues 369 to 415, 432 to 456, and 660 to 699; these read KQIS…LSPE, EEKK…ESEL, and GMKY…ALLQ. Residues 376 to 395 show a composition bias toward acidic residues; it reads EGLDDDEESGSEESGDEEAG. A compositionally biased stretch (basic residues) spans 400–411; the sequence is KKKRKGKNPKRK. The globular stretch occupies residues 620–699; the sequence is VAYTGNNMRK…MASSIDALLQ (80 aa). Polar residues predominate over residues 667-679; it reads QGKSGRPKTSSGR.

The protein belongs to the TRAFAC class myosin-kinesin ATPase superfamily. Kinesin family. Kinesin II subfamily. As to quaternary structure, heterotrimer of a 115 kDa subunit (KAP115) and two kinesin-like subunits of 95 kDa (KRP95) and 85 kDa (KRP85). In terms of processing, the N-terminus is blocked.

It localises to the cytoplasm. It is found in the cytoskeleton. In Strongylocentrotus purpuratus (Purple sea urchin), this protein is Kinesin-II 85 kDa subunit (KRP85).